We begin with the raw amino-acid sequence, 108 residues long: Zinc metalloproteinase/disintegrin (108 aa).

In terms of domain architecture, Peptidase M12B spans 1–19 (NEYQTYLTDRNPQCILNEP). The propeptide occupies 20–35 (LRTDTVSTPVSGNELL). In terms of domain architecture, Disintegrin spans 27–108 (TPVSGNELLE…ADCPRNGFYG (82 aa)). 6 disulfides stabilise this stretch: Cys41/Cys56, Cys43/Cys51, Cys50/Cys73, Cys64/Cys70, Cys69/Cys94, and Cys82/Cys101. The short motif at 86-88 (KGD) is the Cell attachment site; atypical (KGD) element.

Belongs to the venom metalloproteinase (M12B) family. P-II subfamily. P-IIa sub-subfamily. As to quaternary structure, monomeric (disintegrin). It depends on Zn(2+) as a cofactor. In terms of tissue distribution, expressed by the venom gland.

The protein resides in the secreted. In terms of biological role, impairs hemostasis in the envenomed animal. Functionally, inhibits platelet aggregation induced by ADP, thrombin, platelet-activating factor and collagen. Acts by inhibiting fibrinogen interaction with platelet receptors GPIIb/GPIIIa (ITGA2B/ITGB3). In Gloydius brevicauda (Korean slamosa snake), this protein is Zinc metalloproteinase/disintegrin.